The sequence spans 397 residues: Argininosuccinate synthase (397 aa).

ATP is bound at residue Ala9–Ser17. L-citrulline is bound at residue Tyr87. Gly117 contributes to the ATP binding site. L-aspartate is bound by residues Thr119, Asn123, and Asp124. Asn123 lines the L-citrulline pocket. The L-citrulline site is built by Arg127, Ser175, Ser184, Glu260, and Tyr272.

The protein belongs to the argininosuccinate synthase family. Type 1 subfamily. Homotetramer.

It localises to the cytoplasm. The enzyme catalyses L-citrulline + L-aspartate + ATP = 2-(N(omega)-L-arginino)succinate + AMP + diphosphate + H(+). It functions in the pathway amino-acid biosynthesis; L-arginine biosynthesis; L-arginine from L-ornithine and carbamoyl phosphate: step 2/3. The chain is Argininosuccinate synthase from Methanococcus maripaludis (strain DSM 14266 / JCM 13030 / NBRC 101832 / S2 / LL).